Here is a 564-residue protein sequence, read N- to C-terminus: Heat shock factor protein 2 (564 aa).

A DNA-binding region spans residues 21–126; that stretch reads VPAFLSKLWA…LLEHIKRKVS (106 aa). The hydrophobic repeat HR-A/B stretch occupies residues 133–206; the sequence is NKISQEDLSK…VTLVQNNQLV (74 aa). Residues 271–280 are compositionally biased toward acidic residues; sequence EENTMVDEEN. 2 disordered regions span residues 271 to 301 and 320 to 347; these read EENT…CSRS and QGDK…SPLM. Residues 390–415 are hydrophobic repeat HR-C; the sequence is LLDYLDSIDCSLEDFQAMLSGRQFSI. Residues 448 to 465 show a composition bias toward polar residues; sequence TTKSNAGPAASQETQVSK. The tract at residues 448–468 is disordered; the sequence is TTKSNAGPAASQETQVSKPKS.

It belongs to the HSF family. As to quaternary structure, homotrimer. In terms of tissue distribution, expressed in most tissues with the exceptions of blood and liver.

The protein resides in the cytoplasm. Its subcellular location is the nucleus. Its function is as follows. DNA-binding protein that specifically binds heat shock promoter elements (HSE) and activates transcription. HSF2 shows constitutive DNA binding activity, even without heat shock. The chain is Heat shock factor protein 2 (HSF2) from Gallus gallus (Chicken).